Reading from the N-terminus, the 324-residue chain is DNA repair and recombination protein RadA (324 aa).

114–121 contributes to the ATP binding site; sequence GEFGSGKT.

The protein belongs to the eukaryotic RecA-like protein family.

Involved in DNA repair and in homologous recombination. Binds and assemble on single-stranded DNA to form a nucleoprotein filament. Hydrolyzes ATP in a ssDNA-dependent manner and promotes DNA strand exchange between homologous DNA molecules. The sequence is that of DNA repair and recombination protein RadA from Metallosphaera sedula (strain ATCC 51363 / DSM 5348 / JCM 9185 / NBRC 15509 / TH2).